The following is a 136-amino-acid chain: Large ribosomal subunit protein uL16 (136 aa).

It belongs to the universal ribosomal protein uL16 family. As to quaternary structure, part of the 50S ribosomal subunit.

Binds 23S rRNA and is also seen to make contacts with the A and possibly P site tRNAs. This is Large ribosomal subunit protein uL16 from Pelagibacter ubique (strain HTCC1062).